We begin with the raw amino-acid sequence, 334 residues long: Ferredoxin--NADP reductase (334 aa).

The FAD site is built by D33, Q41, Y46, A86, F120, D286, and T327.

The protein belongs to the ferredoxin--NADP reductase type 2 family. In terms of assembly, homodimer. The cofactor is FAD.

It carries out the reaction 2 reduced [2Fe-2S]-[ferredoxin] + NADP(+) + H(+) = 2 oxidized [2Fe-2S]-[ferredoxin] + NADPH. This is Ferredoxin--NADP reductase from Rickettsia akari (strain Hartford).